The chain runs to 355 residues: Small ribosomal subunit biogenesis GTPase RsgA 1 (355 aa).

The region spanning 103–262 (GRVADRQAIA…LIDTPGVREF (160 aa)) is the CP-type G domain. GTP contacts are provided by residues 152-155 (NKAD) and 204-212 (GSSGVGKSS). Zn(2+) is bound by residues Cys-285, Cys-290, His-292, and Cys-298.

It belongs to the TRAFAC class YlqF/YawG GTPase family. RsgA subfamily. Monomer. Associates with 30S ribosomal subunit, binds 16S rRNA. Requires Zn(2+) as cofactor.

It is found in the cytoplasm. In terms of biological role, one of several proteins that assist in the late maturation steps of the functional core of the 30S ribosomal subunit. Helps release RbfA from mature subunits. May play a role in the assembly of ribosomal proteins into the subunit. Circularly permuted GTPase that catalyzes slow GTP hydrolysis, GTPase activity is stimulated by the 30S ribosomal subunit. The chain is Small ribosomal subunit biogenesis GTPase RsgA 1 from Bacteroides thetaiotaomicron (strain ATCC 29148 / DSM 2079 / JCM 5827 / CCUG 10774 / NCTC 10582 / VPI-5482 / E50).